A 342-amino-acid chain; its full sequence is 4-hydroxythreonine-4-phosphate dehydrogenase (342 aa).

The substrate site is built by histidine 140 and threonine 141. Histidine 175, histidine 220, and histidine 275 together coordinate a divalent metal cation. Substrate is bound by residues lysine 283, asparagine 292, and arginine 301.

The protein belongs to the PdxA family. Homodimer. Zn(2+) serves as cofactor. The cofactor is Mg(2+). Requires Co(2+) as cofactor.

The protein localises to the cytoplasm. It carries out the reaction 4-(phosphooxy)-L-threonine + NAD(+) = 3-amino-2-oxopropyl phosphate + CO2 + NADH. Its pathway is cofactor biosynthesis; pyridoxine 5'-phosphate biosynthesis; pyridoxine 5'-phosphate from D-erythrose 4-phosphate: step 4/5. Its function is as follows. Catalyzes the NAD(P)-dependent oxidation of 4-(phosphooxy)-L-threonine (HTP) into 2-amino-3-oxo-4-(phosphooxy)butyric acid which spontaneously decarboxylates to form 3-amino-2-oxopropyl phosphate (AHAP). The polypeptide is 4-hydroxythreonine-4-phosphate dehydrogenase (Rhizobium meliloti (strain 1021) (Ensifer meliloti)).